The chain runs to 95 residues: YcgL domain-containing protein APJL_0712 (95 aa).

In terms of domain architecture, YcgL spans 4 to 88 (HLCAIYKSPK…PPENLLKTFL (85 aa)).

The polypeptide is YcgL domain-containing protein APJL_0712 (Actinobacillus pleuropneumoniae serotype 3 (strain JL03)).